The chain runs to 61 residues: Small ribosomal subunit protein uS14 (61 aa).

Zn(2+)-binding residues include cysteine 24, cysteine 27, cysteine 40, and cysteine 43.

The protein belongs to the universal ribosomal protein uS14 family. Zinc-binding uS14 subfamily. Part of the 30S ribosomal subunit. Contacts proteins S3 and S10. Requires Zn(2+) as cofactor.

Functionally, binds 16S rRNA, required for the assembly of 30S particles and may also be responsible for determining the conformation of the 16S rRNA at the A site. This Mycobacterium avium (strain 104) protein is Small ribosomal subunit protein uS14.